The sequence spans 1906 residues: Zinc metalloprotease ZmpB (1906 aa).

Residues 1–33 form the signal peptide; it reads MFKKDRFSIRKIKGVVGSVFLGSLLMAPSVVDA. Residues 34–76 constitute a propeptide that is removed on maturation; it reads ATYHYVNKEIISQEAKDLIQTGKPDRNEVVYGLVYQKDQLPQT. The short motif at 73–77 is the LPXTG sorting signal element; it reads LPQTG. T76 is subject to Pentaglycyl murein peptidoglycan amidated threonine. 2 helical membrane passes run 77 to 98 and 105 to 127; these read GTEA…LLIY and SVFL…DPVA. The Extracellular portion of the chain corresponds to 128 to 1906; that stretch reads TLALASREGV…TNSFKTSIFK (1779 aa). Residues 178 to 436 form a disordered region; that stretch reads VETPQSITNQ…KASSVSPTDY (259 aa). Over residues 181–196 the composition is skewed to polar residues; that stretch reads PQSITNQEQARTENQV. Composition is skewed to basic and acidic residues over residues 201–239, 252–262, 271–335, 352–375, and 383–408; these read EAPK…KEDS, VESKPEEKVAV, KPAE…KEET, KQTE…REDE, and EPEK…DKIK. 4 repeat units span residues 277 to 291, 293 to 315, 361 to 375, and 380 to 402. The tract at residues 277–375 is 2 X 15 AA repeats of K-V-E-Q-A-G-E-P-V-A-P-R-E-D-E; the sequence is KVEQAGEPVA…GEPVAPREDE (99 aa). Residues 293–375 form a 2 X 23 AA approximate repeats region; sequence APVEPEKQPE…GEPVAPREDE (83 aa). A compositionally biased stretch (polar residues) spans 421–436; it reads LNNQIDKASSVSPTDY. H1562 is a Zn(2+) binding site. E1563 is an active-site residue. Zn(2+) is bound by residues H1566 and E1586.

Belongs to the peptidase M26 family. Requires Zn(2+) as cofactor. Post-translationally, the Gram-positive cell-wall anchor motif LPXTG is located in the N-terminal part, in contrast to such motifs in other known streptococcal and staphylococcal proteins. The protease could be cleaved by the sortase and anchored in the membrane via the two potential N-terminal transmembrane domains, whereas the propeptide located prior to the LPXTG motif would remain attached to the cell wall peptidoglycan by an amide bond.

The protein localises to the secreted. It is found in the cell wall. It localises to the membrane. In terms of biological role, is a virulence factor capable of inducing inflammation in the lower respiratory tract, by increasing tumor necrosis factor alpha (TNF-alpha) concentration in the lungs. Also appears to have other functions important in virulence in models of pneumonia and septicemia. This is Zinc metalloprotease ZmpB (zmpB) from Streptococcus pneumoniae serotype 4 (strain ATCC BAA-334 / TIGR4).